We begin with the raw amino-acid sequence, 185 residues long: Orotate phosphoribosyltransferase (185 aa).

Residues R99, K100, K103, and 125–133 (EDVTTTGGS) contribute to the 5-phospho-alpha-D-ribose 1-diphosphate site. Orotate contacts are provided by T129 and R157.

Belongs to the purine/pyrimidine phosphoribosyltransferase family. PyrE subfamily. As to quaternary structure, homodimer. Mg(2+) is required as a cofactor.

It carries out the reaction orotidine 5'-phosphate + diphosphate = orotate + 5-phospho-alpha-D-ribose 1-diphosphate. It participates in pyrimidine metabolism; UMP biosynthesis via de novo pathway; UMP from orotate: step 1/2. Functionally, catalyzes the transfer of a ribosyl phosphate group from 5-phosphoribose 1-diphosphate to orotate, leading to the formation of orotidine monophosphate (OMP). The chain is Orotate phosphoribosyltransferase from Methanococcus maripaludis (strain DSM 14266 / JCM 13030 / NBRC 101832 / S2 / LL).